Reading from the N-terminus, the 130-residue chain is Calcitonin gene-related peptide 2 (130 aa).

The first 26 residues, 1 to 26 (MDFWKFFPFLALSTIWVLCLASSLQA), serve as a signal peptide directing secretion. The propeptide occupies 27–82 (APFRSALESSLDLGTLGDQEKHLLLAALMQDYEQMKARKLEQEEQETKGSRVTAQK). The cysteines at positions 85 and 90 are disulfide-linked. A Phenylalanine amide modification is found at F120. Positions 127 to 130 (DLQA) are excised as a propeptide.

It belongs to the calcitonin family. Detected in nerve cells of cerebrum, hippocampus and pons/midbrain in newborns, and only in nerve cells of pons/midbrain in adult.

It is found in the secreted. In terms of biological role, CALCB/CGRP2 is a peptide hormone that induces vasodilation mediated by the CALCRL-RAMP1 receptor complex. Dilates a variety of vessels including the coronary, cerebral and systemic vasculature. Its abundance in the CNS also points toward a neurotransmitter or neuromodulator role. The protein is Calcitonin gene-related peptide 2 of Mus musculus (Mouse).